A 104-amino-acid chain; its full sequence is MTTNAPAGSSAAAGSSRRLQQTQNQVDEVVDIMRVNVDKVLERDQKLSELDDRADALQAGASQFETSAAKLKRKYWWKNCKMWAIGITVVVIIIIIIVVWSISS.

The tract at residues 1–23 is disordered; the sequence is MTTNAPAGSSAAAGSSRRLQQTQ. The Cytoplasmic portion of the chain corresponds to 1-81; the sequence is MTTNAPAGSS…KRKYWWKNCK (81 aa). Over residues 7–16 the composition is skewed to low complexity; that stretch reads AGSSAAAGSS. The v-SNARE coiled-coil homology domain occupies 18-78; that stretch reads RLQQTQNQVD…AKLKRKYWWK (61 aa). Residues lysine 70, lysine 72, and lysine 81 each participate in a glycyl lysine isopeptide (Lys-Gly) (interchain with G-Cter in ubiquitin) cross-link. Residues 82 to 102 form a helical; Anchor for type IV membrane protein membrane-spanning segment; that stretch reads MWAIGITVVVIIIIIIVVWSI. Residues 103–104 are Vesicular-facing; that stretch reads SS.

The protein belongs to the synaptobrevin family. In terms of assembly, interacts with POPDC1 (via the C-terminus cytoplasmic tail). Interacts with BCAP31; involved in VAMP3 export from the endoplasmic reticulum. Interacts with BAIAP3; this interaction is increased in the presence of calcium. Interacts with PICALM. Post-translationally, ubiquitinated by RNF167 at Lys-70, Lys-72 and Lys-81, regulating the recycling endosome pathway.

It is found in the early endosome membrane. Its subcellular location is the recycling endosome membrane. The protein localises to the synapse. The protein resides in the synaptosome. Its function is as follows. SNARE involved in vesicular transport from the late endosomes to the trans-Golgi network. The polypeptide is Vesicle-associated membrane protein 3 (VAMP3) (Bos taurus (Bovine)).